Here is a 354-residue protein sequence, read N- to C-terminus: Histidinol-phosphate aminotransferase (354 aa).

An N6-(pyridoxal phosphate)lysine modification is found at lysine 210.

The protein belongs to the class-II pyridoxal-phosphate-dependent aminotransferase family. Histidinol-phosphate aminotransferase subfamily. As to quaternary structure, homodimer. Pyridoxal 5'-phosphate serves as cofactor.

It catalyses the reaction L-histidinol phosphate + 2-oxoglutarate = 3-(imidazol-4-yl)-2-oxopropyl phosphate + L-glutamate. The protein operates within amino-acid biosynthesis; L-histidine biosynthesis; L-histidine from 5-phospho-alpha-D-ribose 1-diphosphate: step 7/9. The chain is Histidinol-phosphate aminotransferase from Clostridium botulinum (strain Okra / Type B1).